An 84-amino-acid chain; its full sequence is Putative defensin-like protein 101 (84 aa).

A signal peptide spans 1-27; it reads MDITKNIVTLLLVVLFPILFYYNNVLA. 4 disulfides stabilise this stretch: Cys-39–Cys-81, Cys-43–Cys-67, Cys-52–Cys-79, and Cys-56–Cys-80.

The protein belongs to the DEFL family.

The protein resides in the secreted. This Arabidopsis thaliana (Mouse-ear cress) protein is Putative defensin-like protein 101.